The primary structure comprises 486 residues: Hematopoietic lineage cell-specific protein (486 aa).

The involved in HAX-1 binding stretch occupies residues 27-66 (FVNDISEKEQRWGAKTIEGSGRTEHINIHQLRNKVSEEHD). Lys41 carries the N6-acetyllysine modification. Cortactin repeat units lie at residues 79-115 (ASHGYGGRFGVERDRMDKSAVGHEYVADVEKHSSQTD), 116-152 (AARGFGGKYGVERDRADKSAVGFDYKGEVEKHASQKD), and 153-189 (YSHGFGGRYGVEKDKRDKAALGYDYKGETEKHESQRD). Lys123 carries the post-translational modification N6-acetyllysine. Residue Tyr140 is modified to Phosphotyrosine. Residues 190–212 (YAKGFGGQYGIQKDRVDKSAVGF) form a Cortactin 4; truncated repeat. Lys192 carries the N6-acetyllysine modification. At Tyr198 the chain carries Phosphotyrosine. Tyr222 is modified (phosphotyrosine; by FGR). Residues 226–430 (TPIEAASSGA…AGPSAGAGGA (205 aa)) are disordered. 2 stretches are compositionally biased toward basic and acidic residues: residues 240–258 (AKFESLAEEKRKREEEEKA) and 265–276 (QQERKAVVKMSR). Lys241 is subject to N6-acetyllysine. A Phosphoserine modification is found at Ser275. Phosphothreonine is present on Thr330. Ser333 is subject to Phosphoserine. The segment covering 358 to 367 (VVEEPVYEAA) has biased composition (low complexity). A compositionally biased stretch (acidic residues) spans 368–413 (PELEPEPEPDYEPEPETEPDYEDVGELDRQDEDAEGDYEDVLEPED). 2 positions are modified to phosphotyrosine; by SYK and FES: Tyr388 and Tyr405. Residues 429–486 (GAGISAIALYDYQGEGSDELSFDPDDIITDIEMVDEGWWRGQCRGHFGLFPANYVKLL) form the SH3 domain.

In terms of assembly, interacts (via SH2 domain) with FGR. Associates with the SH2 and SH3 domains of LCK. Binding to he LCK SH3 domain occurs constitutively, while binding to the LCK SH2 domain occurs only upon TCR stimulation. A similar binding pattern was observed with LYN, but not with FYN in which the FYN SH2 region associates upon TCR stimulation but the FYN SH3 region does not associate regardless of TCR stimulation. Directly associates with HAX1, through binding to its C-terminal region. Interacts with HS1BP3. Interacts with FES/FPS. Forms a multiprotein complex with LYN and ANKRD54. Phosphorylated by LYN, FYN and FGR after cross-linking of surface IgM on B-cells. Phosphorylation by LYN, FYN and FGR requires prior phosphorylation by SYK. Binds to LCK in vivo, and is tyrosine phosphorylated upon TCR stimulation. Phosphorylated by FES. As to expression, expressed only in tissues and cells of hematopoietic origin.

Its subcellular location is the mitochondrion. In terms of biological role, substrate of the antigen receptor-coupled tyrosine kinase. Plays a role in antigen receptor signaling for both clonal expansion and deletion in lymphoid cells. May also be involved in the regulation of gene expression. The sequence is that of Hematopoietic lineage cell-specific protein (Hcls1) from Mus musculus (Mouse).